We begin with the raw amino-acid sequence, 725 residues long: N-alpha-acetyltransferase 35, NatC auxiliary subunit (725 aa).

The disordered stretch occupies residues 548–573; the sequence is ERIMEEQQKGRSSKKTKKKKKVRPLS. Basic residues predominate over residues 558–571; the sequence is RSSKKTKKKKKVRP.

Belongs to the MAK10 family. Component of the N-terminal acetyltransferase C (NatC) complex, which is composed of NAA35, NAA38 and NAA30. As to expression, expressed in primary spermatocytes, basal epidermis, interstitial fibroblasts of skeletal muscle, and intestinal crypts.

The protein resides in the cytoplasm. Its function is as follows. Auxillary component of the N-terminal acetyltransferase C (NatC) complex which catalyzes acetylation of N-terminal methionine residues. N-terminal acetylation protects proteins from ubiquitination and degradation by the N-end rule pathway. Involved in regulation of apoptosis and proliferation of smooth muscle cells. This chain is N-alpha-acetyltransferase 35, NatC auxiliary subunit (Naa35), found in Rattus norvegicus (Rat).